The sequence spans 417 residues: Serine hydroxymethyltransferase (417 aa).

Residues Leu-121 and 125–127 (GHL) contribute to the (6S)-5,6,7,8-tetrahydrofolate site. An N6-(pyridoxal phosphate)lysine modification is found at Lys-229. 355–357 (SPF) provides a ligand contact to (6S)-5,6,7,8-tetrahydrofolate.

It belongs to the SHMT family. As to quaternary structure, homodimer. The cofactor is pyridoxal 5'-phosphate.

It localises to the cytoplasm. It carries out the reaction (6R)-5,10-methylene-5,6,7,8-tetrahydrofolate + glycine + H2O = (6S)-5,6,7,8-tetrahydrofolate + L-serine. The protein operates within one-carbon metabolism; tetrahydrofolate interconversion. Its pathway is amino-acid biosynthesis; glycine biosynthesis; glycine from L-serine: step 1/1. Catalyzes the reversible interconversion of serine and glycine with tetrahydrofolate (THF) serving as the one-carbon carrier. This reaction serves as the major source of one-carbon groups required for the biosynthesis of purines, thymidylate, methionine, and other important biomolecules. Also exhibits THF-independent aldolase activity toward beta-hydroxyamino acids, producing glycine and aldehydes, via a retro-aldol mechanism. This chain is Serine hydroxymethyltransferase, found in Salmonella choleraesuis (strain SC-B67).